Consider the following 126-residue polypeptide: Aspartate 1-decarboxylase (126 aa).

Ser25 (schiff-base intermediate with substrate; via pyruvic acid) is an active-site residue. Ser25 bears the Pyruvic acid (Ser) mark. Thr57 contributes to the substrate binding site. The active-site Proton donor is the Tyr58. Gly73–Ala75 is a binding site for substrate.

This sequence belongs to the PanD family. Heterooctamer of four alpha and four beta subunits. The cofactor is pyruvate. Post-translationally, is synthesized initially as an inactive proenzyme, which is activated by self-cleavage at a specific serine bond to produce a beta-subunit with a hydroxyl group at its C-terminus and an alpha-subunit with a pyruvoyl group at its N-terminus.

It is found in the cytoplasm. The catalysed reaction is L-aspartate + H(+) = beta-alanine + CO2. It functions in the pathway cofactor biosynthesis; (R)-pantothenate biosynthesis; beta-alanine from L-aspartate: step 1/1. Functionally, catalyzes the pyruvoyl-dependent decarboxylation of aspartate to produce beta-alanine. This Azotobacter vinelandii (strain DJ / ATCC BAA-1303) protein is Aspartate 1-decarboxylase.